The following is an 809-amino-acid chain: Ribosome biogenesis protein ERB1 (809 aa).

Residues 1-107 (MSKSSKVGMT…SDTRSITDAI (107 aa)) form a disordered region. Composition is skewed to acidic residues over residues 30-70 (AEVD…EDSD) and 77-97 (LGEE…EPQE). Residues 267–383 (RFVPSKHEAK…LRKVPGYQES (117 aa)) form a required for interaction with NOP7 region. The tract at residues 383 to 419 (SVRERFERCLDLYLAPRVRHNKLNIDPESLIPELPSP) is required for interaction with YTM1. 2 WD repeats span residues 435–474 (GHTD…QVFN) and 483–523 (NDED…FDIE). A disordered region spans residues 545 to 569 (EEKFKNDEGNEDEDDEDDSATSTAV). The segment covering 553–563 (GNEDEDDEDDS) has biased composition (acidic residues). WD repeat units lie at residues 593 to 635 (QCRK…SQSP), 638 to 676 (KSKG…LVKK), 679 to 718 (PGVR…TPYK), 722 to 762 (YHEK…DLMT), and 778 to 809 (VNSI…LWTT).

The protein belongs to the WD repeat BOP1/ERB1 family. In terms of assembly, component of the NOP7 complex, composed of ERB1, NOP7 and YTM1. The complex is held together by ERB1, which interacts with NOP7 via its N-terminal domain and with YTM1 via a high-affinity interaction between the seven-bladed beta-propeller domains of the 2 proteins. The NOP7 complex associates with the 66S pre-ribosome.

Its subcellular location is the nucleus. It localises to the nucleolus. The protein resides in the nucleoplasm. Functionally, component of the NOP7 complex, which is required for maturation of the 25S and 5.8S ribosomal RNAs and formation of the 60S ribosome. The polypeptide is Ribosome biogenesis protein ERB1 (Scheffersomyces stipitis (strain ATCC 58785 / CBS 6054 / NBRC 10063 / NRRL Y-11545) (Yeast)).